The sequence spans 654 residues: tRNA uridine 5-carboxymethylaminomethyl modification enzyme MnmG (654 aa).

FAD is bound at residue 17–22 (GGGHAG). 289–303 (GPRYCPSIEDKIVKF) serves as a coordination point for NAD(+).

Belongs to the MnmG family. Homodimer. Heterotetramer of two MnmE and two MnmG subunits. Requires FAD as cofactor.

The protein localises to the cytoplasm. Its function is as follows. NAD-binding protein involved in the addition of a carboxymethylaminomethyl (cmnm) group at the wobble position (U34) of certain tRNAs, forming tRNA-cmnm(5)s(2)U34. In Prochlorococcus marinus subsp. pastoris (strain CCMP1986 / NIES-2087 / MED4), this protein is tRNA uridine 5-carboxymethylaminomethyl modification enzyme MnmG.